The sequence spans 122 residues: Large ribosomal subunit protein bL12 (122 aa).

This sequence belongs to the bacterial ribosomal protein bL12 family. In terms of assembly, homodimer. Part of the ribosomal stalk of the 50S ribosomal subunit. Forms a multimeric L10(L12)X complex, where L10 forms an elongated spine to which 2 to 4 L12 dimers bind in a sequential fashion. Binds GTP-bound translation factors.

In terms of biological role, forms part of the ribosomal stalk which helps the ribosome interact with GTP-bound translation factors. Is thus essential for accurate translation. The protein is Large ribosomal subunit protein bL12 of Shewanella denitrificans (strain OS217 / ATCC BAA-1090 / DSM 15013).